A 169-amino-acid polypeptide reads, in one-letter code: Ribosome maturation factor RimM (169 aa).

The PRC barrel domain occupies 95-169; the sequence is EDGYYWTDLI…QITVDWELGY (75 aa).

It belongs to the RimM family. Binds ribosomal protein uS19.

The protein localises to the cytoplasm. Its function is as follows. An accessory protein needed during the final step in the assembly of 30S ribosomal subunit, possibly for assembly of the head region. Essential for efficient processing of 16S rRNA. May be needed both before and after RbfA during the maturation of 16S rRNA. It has affinity for free ribosomal 30S subunits but not for 70S ribosomes. In Nitrosomonas europaea (strain ATCC 19718 / CIP 103999 / KCTC 2705 / NBRC 14298), this protein is Ribosome maturation factor RimM.